We begin with the raw amino-acid sequence, 249 residues long: Triosephosphate isomerase (249 aa).

Substrate contacts are provided by N12 and K14. K14 carries the N6-acetyllysine modification. The residue at position 68 (Y68) is a 3'-nitrotyrosine. A Phosphoserine modification is found at S80. The Electrophile role is filled by H96. S106 bears the Phosphoserine mark. Residue K142 forms a Glycyl lysine isopeptide (Lys-Gly) (interchain with G-Cter in SUMO1) linkage. The residue at position 149 (K149) is an N6-succinyllysine. K156 bears the N6-acetyllysine; alternate mark. K156 carries the N6-succinyllysine; alternate modification. A Phosphoserine modification is found at S159. Catalysis depends on E166, which acts as the Proton acceptor. T173 is modified (phosphothreonine). K194 carries the post-translational modification N6-acetyllysine; alternate. Position 194 is an N6-succinyllysine; alternate (K194). Residue K194 is modified to N6-methyllysine; alternate. Position 198 is a phosphoserine (S198). Position 209 is a 3'-nitrotyrosine (Y209). The residue at position 212 (S212) is a Phosphoserine. The residue at position 214 (T214) is a Phosphothreonine. S223 bears the Phosphoserine mark. N6-acetyllysine is present on K238.

The protein belongs to the triosephosphate isomerase family. As to quaternary structure, homodimer.

Its subcellular location is the cytoplasm. The catalysed reaction is dihydroxyacetone phosphate = methylglyoxal + phosphate. It catalyses the reaction D-glyceraldehyde 3-phosphate = dihydroxyacetone phosphate. It functions in the pathway carbohydrate degradation; glycolysis; D-glyceraldehyde 3-phosphate from glycerone phosphate: step 1/1. It participates in carbohydrate biosynthesis; gluconeogenesis. Triosephosphate isomerase is an extremely efficient metabolic enzyme that catalyzes the interconversion between dihydroxyacetone phosphate (DHAP) and D-glyceraldehyde-3-phosphate (G3P) in glycolysis and gluconeogenesis. Its function is as follows. It is also responsible for the non-negligible production of methylglyoxal a reactive cytotoxic side-product that modifies and can alter proteins, DNA and lipids. The polypeptide is Triosephosphate isomerase (TPI1) (Bos taurus (Bovine)).